The sequence spans 99 residues: Aspartyl/glutamyl-tRNA(Asn/Gln) amidotransferase subunit C (99 aa).

The protein belongs to the GatC family. Heterotrimer of A, B and C subunits.

It carries out the reaction L-glutamyl-tRNA(Gln) + L-glutamine + ATP + H2O = L-glutaminyl-tRNA(Gln) + L-glutamate + ADP + phosphate + H(+). The enzyme catalyses L-aspartyl-tRNA(Asn) + L-glutamine + ATP + H2O = L-asparaginyl-tRNA(Asn) + L-glutamate + ADP + phosphate + 2 H(+). Its function is as follows. Allows the formation of correctly charged Asn-tRNA(Asn) or Gln-tRNA(Gln) through the transamidation of misacylated Asp-tRNA(Asn) or Glu-tRNA(Gln) in organisms which lack either or both of asparaginyl-tRNA or glutaminyl-tRNA synthetases. The reaction takes place in the presence of glutamine and ATP through an activated phospho-Asp-tRNA(Asn) or phospho-Glu-tRNA(Gln). The polypeptide is Aspartyl/glutamyl-tRNA(Asn/Gln) amidotransferase subunit C (Ralstonia pickettii (strain 12J)).